Here is a 220-residue protein sequence, read N- to C-terminus: Small ribosomal subunit protein uS3 (220 aa).

The KH type-2 domain maps to 24–93 (IKEFLEYRLS…NPQIDVIDVS (70 aa)).

It belongs to the universal ribosomal protein uS3 family. As to quaternary structure, part of the 30S ribosomal subunit.

In terms of biological role, binds the lower part of the 30S subunit head. This chain is Small ribosomal subunit protein uS3, found in Pyrobaculum arsenaticum (strain DSM 13514 / JCM 11321 / PZ6).